The primary structure comprises 101 residues: Iron-sulfur cluster assembly protein CyaY (101 aa).

This sequence belongs to the frataxin family.

Functionally, involved in iron-sulfur (Fe-S) cluster assembly. May act as a regulator of Fe-S biogenesis. The chain is Iron-sulfur cluster assembly protein CyaY from Actinobacillus pleuropneumoniae serotype 7 (strain AP76).